The primary structure comprises 377 residues: Probable O-methyltransferase 3 (377 aa).

Asp-241 lines the S-adenosyl-L-methionine pocket. His-279 functions as the Proton acceptor in the catalytic mechanism.

Belongs to the class I-like SAM-binding methyltransferase superfamily. Cation-independent O-methyltransferase family. As to expression, highly expressed in lupulin glands. Detected in early-, mid- and late-stage cones.

This chain is Probable O-methyltransferase 3, found in Humulus lupulus (European hop).